Reading from the N-terminus, the 785-residue chain is Phosphoinositide phosphatase SAC5 (785 aa).

In terms of domain architecture, SAC spans 158-533; it reads LSVVDLSKNF…GNTLAMQYGG (376 aa). The Phosphatase catalytic core motif lies at 469–480; sequence RTNCIDCLDRTN. The span at 688–700 shows a compositional bias: polar residues; it reads GSGQMFQGSSSNS. The disordered stretch occupies residues 688-707; the sequence is GSGQMFQGSSSNSDSHRPND.

As to quaternary structure, component of the PI(3,5)P2 regulatory complex at least composed of ATG18, SAC/FIG4, FAB1 and VAC14. The cofactor is Mg(2+). As to expression, ubiquitous with a higher level of expression in young seedlings than in other tissues.

It localises to the vacuole membrane. The enzyme catalyses a 1,2-diacyl-sn-glycero-3-phospho-(1D-myo-inositol-3,5-bisphosphate) + H2O = a 1,2-diacyl-sn-glycero-3-phospho-(1D-myo-inositol-3-phosphate) + phosphate. In terms of biological role, the PI(3,5)P2 regulatory complex regulates both the synthesis and turnover of phosphatidylinositol 3,5-bisphosphate (PtdIns(3,5)P2). This is Phosphoinositide phosphatase SAC5 (SAC5) from Arabidopsis thaliana (Mouse-ear cress).